Here is a 160-residue protein sequence, read N- to C-terminus: Cyclic pyranopterin monophosphate synthase (160 aa).

Substrate-binding positions include 74 to 76 and 112 to 113; these read LSH and ME. Residue Asp-127 is part of the active site.

Belongs to the MoaC family. Homohexamer; trimer of dimers.

The enzyme catalyses (8S)-3',8-cyclo-7,8-dihydroguanosine 5'-triphosphate = cyclic pyranopterin phosphate + diphosphate. The protein operates within cofactor biosynthesis; molybdopterin biosynthesis. Functionally, catalyzes the conversion of (8S)-3',8-cyclo-7,8-dihydroguanosine 5'-triphosphate to cyclic pyranopterin monophosphate (cPMP). This Trichlorobacter lovleyi (strain ATCC BAA-1151 / DSM 17278 / SZ) (Geobacter lovleyi) protein is Cyclic pyranopterin monophosphate synthase.